The primary structure comprises 296 residues: ATP phosphoribosyltransferase (296 aa).

The protein belongs to the ATP phosphoribosyltransferase family. Long subfamily. Requires Mg(2+) as cofactor.

It localises to the cytoplasm. It catalyses the reaction 1-(5-phospho-beta-D-ribosyl)-ATP + diphosphate = 5-phospho-alpha-D-ribose 1-diphosphate + ATP. It participates in amino-acid biosynthesis; L-histidine biosynthesis; L-histidine from 5-phospho-alpha-D-ribose 1-diphosphate: step 1/9. With respect to regulation, feedback inhibited by histidine. Its function is as follows. Catalyzes the condensation of ATP and 5-phosphoribose 1-diphosphate to form N'-(5'-phosphoribosyl)-ATP (PR-ATP). Has a crucial role in the pathway because the rate of histidine biosynthesis seems to be controlled primarily by regulation of HisG enzymatic activity. The sequence is that of ATP phosphoribosyltransferase from Halorubrum lacusprofundi (strain ATCC 49239 / DSM 5036 / JCM 8891 / ACAM 34).